Here is a 146-residue protein sequence, read N- to C-terminus: Single-stranded DNA-binding protein, mitochondrial (146 aa).

The transit peptide at 1 to 16 (MLRNASAQILKQFVRH) directs the protein to the mitochondrion. The 112-residue stretch at 29-140 (INKVQILGRV…IIADNIVFLS (112 aa)) folds into the SSB domain.

The protein localises to the mitochondrion. Its subcellular location is the mitochondrion matrix. The protein resides in the mitochondrion nucleoid. In terms of biological role, binds preferentially and cooperatively to pyrimidine rich single-stranded DNA (ss-DNA). May be required to maintain the copy number of mitochondrial DNA (mtDNA) and play a crucial role during mtDNA replication. Required for retinal ganglion cell differentiation and retinal integrity. In Danio rerio (Zebrafish), this protein is Single-stranded DNA-binding protein, mitochondrial.